The sequence spans 1346 residues: Pikromycin polyketide synthase component PikAIV (1346 aa).

Positions 3-32 (SSNEQLVDALRASLKENEELRKESRRRADR) form a coiled coil. A Ketosynthase family 3 (KS3) domain is found at 34-461 (QEPMAIVGMS…GTNAHVVLEE (428 aa)). Residues 37–1332 (MAIVGMSCRF…HAPAVAEAVL (1296 aa)) are module 6. Residues Cys-207, His-342, and His-382 each act as for beta-ketoacyl synthase activity in the active site. The acyltransferase stretch occupies residues 562–844 (FVFPGQGTQW…VLTMTLPDKV (283 aa)). Catalysis depends on Ser-652, which acts as the Acyl-ester intermediate; for acyltransferase activity. Residues 945–1020 (SAVLAMVMRQ…ALAERISDEL (76 aa)) enclose the Carrier domain. An O-(pantetheine 4'-phosphoryl)serine modification is found at Ser-980. The tract at residues 1028 to 1050 (AEPSDHEQAEEEKAAAPAGARSG) is disordered. Positions 1030–1041 (PSDHEQAEEEKA) are enriched in basic and acidic residues. Thr-1125 is a binding site for substrate. The tract at residues 1127 to 1332 (ANGGPHEFLR…HAPAVAEAVL (206 aa)) is thioesterase. Ser-1196 (nucleophile; for thioesterase activity) is an active-site residue. Gly-1197 and Asp-1224 together coordinate substrate. His-1316 (proton acceptor; for thioesterase activity) is an active-site residue.

In terms of assembly, homodimer. Pikromycin PKS consists of a combination of multimodular (PikAI and PikAII) and monomodular (PikAIII and PikAIV) polypeptides each coding for a functional synthase subunit which participates in 1 (monomodular) or 2 (multimodular) of the six FAS-like elongation steps required for formation of the polyketide. Module 1, 2, 3, 4, 5, and 6 participating in biosynthesis steps 1, 2, 3, 4, 5, and 6, respectively. Pantetheine 4'-phosphate is required as a cofactor.

It catalyses the reaction 5 (S)-methylmalonyl-CoA + malonyl-CoA + 5 NADPH + 11 H(+) = 10-deoxymethynolide + 6 CO2 + 5 NADP(+) + 6 CoA + 2 H2O. The catalysed reaction is 6 (S)-methylmalonyl-CoA + malonyl-CoA + 5 NADPH + 12 H(+) = narbonolide + 7 CO2 + 5 NADP(+) + 7 CoA + 2 H2O. It functions in the pathway antibiotic biosynthesis. Its activity is regulated as follows. Irreversibly inhibited by (2S,3R,4S)-2,4-dihydroxy-3-methylhexyl-phosphonic acid and (3R,4S)-4-hydroxy-3-methyl-2-oxohexyl-phosphonic acid. Involved in the biosynthesis of 12- and 14-membered ring macrolactone antibiotics such as methymycin and neomethymycin, and pikromycin and narbomycin, respectively. Component of the pikromycin PKS which catalyzes the biosynthesis of both precursors 10-deoxymethynolide (12-membered ring macrolactone) and narbonolide (14-membered ring macrolactone). Chain elongation through PikAI, PikAII and PikAIII followed by thioesterase catalyzed termination results in the production of 10-deoxymethynolide, while continued elongation through PikAIV, followed by thioesterase (TE) catalyzed cyclization results in the biosynthesis of the narbonolide. The thioesterase can use a series of diketide-N-acetylcysteamine (SNAC) thioesters, but has a strong preference for the 2-methyl-3-ketopentanoyl-SNAC over the stereoisomers of 2-methyl-3-hydroxyacyl-SNAC. In Streptomyces venezuelae, this protein is Pikromycin polyketide synthase component PikAIV.